We begin with the raw amino-acid sequence, 147 residues long: Cystatin-9-like (147 aa).

Residues 1–28 (MLGLPWKGGLSWALLLLLLGSQILLIYA) form the signal peptide. The cysteines at positions 98 and 108 are disulfide-linked. Asparagine 117 and asparagine 139 each carry an N-linked (GlcNAc...) asparagine glycan. A disulfide bond links cysteine 122 and cysteine 142.

Belongs to the cystatin family. As to expression, specifically expressed in testis.

The protein resides in the secreted. The protein is Cystatin-9-like (CST9L) of Homo sapiens (Human).